The following is a 431-amino-acid chain: Glutamate--tRNA ligase 2 (431 aa).

Positions 6–16 match the 'HIGH' region motif; it reads PSPTGDMHIGN. The 'KMSKS' region signature appears at 235–239; that stretch reads KMSKR. K238 serves as a coordination point for ATP.

It belongs to the class-I aminoacyl-tRNA synthetase family. Glutamate--tRNA ligase type 1 subfamily. In terms of assembly, monomer.

The protein localises to the cytoplasm. The catalysed reaction is tRNA(Glu) + L-glutamate + ATP = L-glutamyl-tRNA(Glu) + AMP + diphosphate. Functionally, catalyzes the attachment of glutamate to tRNA(Glu) in a two-step reaction: glutamate is first activated by ATP to form Glu-AMP and then transferred to the acceptor end of tRNA(Glu). The protein is Glutamate--tRNA ligase 2 of Campylobacter jejuni subsp. doylei (strain ATCC BAA-1458 / RM4099 / 269.97).